A 348-amino-acid chain; its full sequence is NADH-quinone oxidoreductase subunit H (348 aa).

9 consecutive transmembrane segments (helical) span residues 13-33 (LIMV…IAFL), 50-70 (PNVV…KFIL), 82-102 (AVFL…YAVI), 115-135 (VGIL…IMGG), 161-181 (IGLV…TDIV), 198-218 (FLDW…ISGL), 258-278 (AIVL…LPIV), 285-305 (WVPG…MIAL), and 321-341 (LGWK…AFVL).

Belongs to the complex I subunit 1 family. As to quaternary structure, NDH-1 is composed of 14 different subunits. Subunits NuoA, H, J, K, L, M, N constitute the membrane sector of the complex.

Its subcellular location is the cell inner membrane. The enzyme catalyses a quinone + NADH + 5 H(+)(in) = a quinol + NAD(+) + 4 H(+)(out). In terms of biological role, NDH-1 shuttles electrons from NADH, via FMN and iron-sulfur (Fe-S) centers, to quinones in the respiratory chain. The immediate electron acceptor for the enzyme in this species is believed to be ubiquinone. Couples the redox reaction to proton translocation (for every two electrons transferred, four hydrogen ions are translocated across the cytoplasmic membrane), and thus conserves the redox energy in a proton gradient. This subunit may bind ubiquinone. This chain is NADH-quinone oxidoreductase subunit H, found in Agrobacterium fabrum (strain C58 / ATCC 33970) (Agrobacterium tumefaciens (strain C58)).